A 134-amino-acid polypeptide reads, in one-letter code: UPF0715 membrane protein YoaG (134 aa).

A run of 4 helical transmembrane segments spans residues 9–29 (LMTLGLSSLTFGLLLGFYSFV), 35–55 (IIALFTAAIALLYGFVVYGLF), 72–92 (VMYLLIYSVVAFIAAFLFFVI), and 106–126 (FYYMLSIAAAVIYWLWDSLIL).

It belongs to the UPF0715 family.

It localises to the cell membrane. This is UPF0715 membrane protein YoaG (yoaG) from Bacillus subtilis (strain 168).